A 343-amino-acid chain; its full sequence is Multidrug resistance protein MdtN (343 aa).

The Cytoplasmic portion of the chain corresponds to Met-1–Lys-12. Residues Phe-13–Val-33 traverse the membrane as a helical; Signal-anchor for type II membrane protein segment. Residues Asp-34 to Gln-343 lie on the Periplasmic side of the membrane.

The protein belongs to the membrane fusion protein (MFP) (TC 8.A.1) family. As to quaternary structure, could be part of a tripartite efflux system composed of MdtN, MdtO and MdtP.

It localises to the cell inner membrane. Its function is as follows. Could be involved in resistance to puromycin, acriflavine and tetraphenylarsonium chloride. The protein is Multidrug resistance protein MdtN (mdtN) of Escherichia coli O157:H7.